The sequence spans 137 residues: Large ribosomal subunit protein uL16 (137 aa).

Belongs to the universal ribosomal protein uL16 family. Part of the 50S ribosomal subunit.

Its function is as follows. Binds 23S rRNA and is also seen to make contacts with the A and possibly P site tRNAs. The chain is Large ribosomal subunit protein uL16 from Methylorubrum extorquens (strain CM4 / NCIMB 13688) (Methylobacterium extorquens).